We begin with the raw amino-acid sequence, 306 residues long: tRNA pseudouridine synthase B (306 aa).

Aspartate 47 acts as the Nucleophile in catalysis.

Belongs to the pseudouridine synthase TruB family. Type 1 subfamily.

The enzyme catalyses uridine(55) in tRNA = pseudouridine(55) in tRNA. In terms of biological role, responsible for synthesis of pseudouridine from uracil-55 in the psi GC loop of transfer RNAs. The protein is tRNA pseudouridine synthase B of Neisseria gonorrhoeae (strain ATCC 700825 / FA 1090).